The following is a 430-amino-acid chain: Probable sugar isomerase R00627 (430 aa).

Residues histidine 257, aspartate 289, and aspartate 291 each contribute to the Mn(2+) site.

Belongs to the rhamnose isomerase family. It depends on Mn(2+) as a cofactor.

The protein is Probable sugar isomerase R00627 of Rhizobium meliloti (strain 1021) (Ensifer meliloti).